We begin with the raw amino-acid sequence, 88 residues long: Large ribosomal subunit protein eL37 (88 aa).

Cys-17, Cys-20, Cys-32, and Cys-35 together coordinate Zn(2+). Residues 17–35 form a C4-type zinc finger; it reads CNRCGRRSFHVQKKTCSSC.

The protein belongs to the eukaryotic ribosomal protein eL37 family. Zn(2+) is required as a cofactor.

Its function is as follows. Binds to the 23S rRNA. The protein is Large ribosomal subunit protein eL37 (RPL37) of Candida albicans (Yeast).